Reading from the N-terminus, the 187-residue chain is Protein GrpE (187 aa).

The interval 1-23 (MNNEKELKKEETSVENKEKKVAT) is disordered.

The protein belongs to the GrpE family. Homodimer.

Its subcellular location is the cytoplasm. Functionally, participates actively in the response to hyperosmotic and heat shock by preventing the aggregation of stress-denatured proteins, in association with DnaK and GrpE. It is the nucleotide exchange factor for DnaK and may function as a thermosensor. Unfolded proteins bind initially to DnaJ; upon interaction with the DnaJ-bound protein, DnaK hydrolyzes its bound ATP, resulting in the formation of a stable complex. GrpE releases ADP from DnaK; ATP binding to DnaK triggers the release of the substrate protein, thus completing the reaction cycle. Several rounds of ATP-dependent interactions between DnaJ, DnaK and GrpE are required for fully efficient folding. This Mesoplasma florum (strain ATCC 33453 / NBRC 100688 / NCTC 11704 / L1) (Acholeplasma florum) protein is Protein GrpE.